The following is a 404-amino-acid chain: Subtilisin-like proteinase Mp1 (404 aa).

A signal peptide spans 1-19 (MVGFKTLALHLAAVLPALA). Positions 20 to 112 (APVDKQATQV…VEPDQVWDLY (93 aa)) are excised as a propeptide. One can recognise an Inhibitor I9 domain in the interval 33–111 (SYIITLKQGA…FVEPDQVWDL (79 aa)). The Peptidase S8 domain occupies 121 to 404 (PWGLGSISHR…NLIAFNGVTA (284 aa)). N-linked (GlcNAc...) asparagine glycosylation is present at Asn133. Residues Asp154, His186, and Ser347 each act as charge relay system in the active site.

It belongs to the peptidase S8 family.

The protein resides in the secreted. The protein is Subtilisin-like proteinase Mp1 of Magnaporthiopsis poae (Kentucky bluegrass fungus).